The sequence spans 292 residues: Formamidopyrimidine-DNA glycosylase (292 aa).

The active-site Schiff-base intermediate with DNA is the proline 2. Glutamate 3 acts as the Proton donor in catalysis. The active-site Proton donor; for beta-elimination activity is lysine 60. Histidine 109, arginine 128, and arginine 173 together coordinate DNA. The FPG-type zinc-finger motif lies at 258–292 (NVYRRTGRECRKCGNLIERQKITGRSTHWCPNCQK). The active-site Proton donor; for delta-elimination activity is arginine 282.

The protein belongs to the FPG family. Monomer. Zn(2+) is required as a cofactor.

The enzyme catalyses Hydrolysis of DNA containing ring-opened 7-methylguanine residues, releasing 2,6-diamino-4-hydroxy-5-(N-methyl)formamidopyrimidine.. It carries out the reaction 2'-deoxyribonucleotide-(2'-deoxyribose 5'-phosphate)-2'-deoxyribonucleotide-DNA = a 3'-end 2'-deoxyribonucleotide-(2,3-dehydro-2,3-deoxyribose 5'-phosphate)-DNA + a 5'-end 5'-phospho-2'-deoxyribonucleoside-DNA + H(+). Involved in base excision repair of DNA damaged by oxidation or by mutagenic agents. Acts as a DNA glycosylase that recognizes and removes damaged bases. Has a preference for oxidized purines, such as 7,8-dihydro-8-oxoguanine (8-oxoG). Has AP (apurinic/apyrimidinic) lyase activity and introduces nicks in the DNA strand. Cleaves the DNA backbone by beta-delta elimination to generate a single-strand break at the site of the removed base with both 3'- and 5'-phosphates. In Prochlorococcus marinus (strain MIT 9301), this protein is Formamidopyrimidine-DNA glycosylase.